Reading from the N-terminus, the 429-residue chain is Adenylosuccinate synthetase (429 aa).

Residues 12-18 (GDEGKGK) and 40-42 (GHT) contribute to the GTP site. The active-site Proton acceptor is Asp-13. The Mg(2+) site is built by Asp-13 and Gly-40. IMP is bound by residues 13–16 (DEGK), 38–41 (NAGH), Thr-129, Arg-143, Gln-223, Thr-238, and Arg-302. Catalysis depends on His-41, which acts as the Proton donor. Substrate is bound at residue 298 to 304 (VVTGRKR). Residues Arg-304, 330–332 (KLD), and 412–414 (STS) each bind GTP.

Belongs to the adenylosuccinate synthetase family. As to quaternary structure, homodimer. The cofactor is Mg(2+).

Its subcellular location is the cytoplasm. The catalysed reaction is IMP + L-aspartate + GTP = N(6)-(1,2-dicarboxyethyl)-AMP + GDP + phosphate + 2 H(+). It participates in purine metabolism; AMP biosynthesis via de novo pathway; AMP from IMP: step 1/2. In terms of biological role, plays an important role in the de novo pathway of purine nucleotide biosynthesis. Catalyzes the first committed step in the biosynthesis of AMP from IMP. In Bartonella bacilliformis (strain ATCC 35685 / KC583 / Herrer 020/F12,63), this protein is Adenylosuccinate synthetase.